We begin with the raw amino-acid sequence, 185 residues long: Signal peptidase complex subunit 3 (185 aa).

The Cytoplasmic segment spans residues methionine 1–threonine 12. A helical; Signal-anchor for type II membrane protein membrane pass occupies residues phenylalanine 13–isoleucine 34. Residues glutamine 35–lysine 185 lie on the Lumenal side of the membrane. Asparagine 148 is a glycosylation site (N-linked (GlcNAc...) asparagine).

This sequence belongs to the SPCS3 family. As to quaternary structure, component of the signal peptidase complex (SPC) composed of a catalytic subunit sec11 and three accessory subunits spc1, spc2 and spc3. The complex induces a local thinning of the ER membrane which is used to measure the length of the signal peptide (SP) h-region of protein substrates. This ensures the selectivity of the complex towards h-regions shorter than 18-20 amino acids. SPC associates with the translocon complex.

The protein localises to the endoplasmic reticulum membrane. Its function is as follows. Essential component of the signal peptidase complex (SPC) which catalyzes the cleavage of N-terminal signal sequences from nascent proteins as they are translocated into the lumen of the endoplasmic reticulum. Essential for the SPC catalytic activity, possibly by stabilizing and positioning the active center of the complex close to the lumenal surface. Essential for viability. This Schizosaccharomyces pombe (strain 972 / ATCC 24843) (Fission yeast) protein is Signal peptidase complex subunit 3 (spc3).